The sequence spans 961 residues: E3 ubiquitin-protein ligase TRIM37 (961 aa).

At M1 the chain carries N-acetylmethionine. The segment at 15–55 (CFICMEKLRDARLCPHCSKLCCFSCIRRWLTEQRAQCPHCR) adopts an RING-type; degenerate zinc-finger fold. The segment at 90–132 (NEKDKCENHHEKLSVFCWTCKKCICHQCALWGGMHGGHTFKPL) adopts a B box-type zinc-finger fold. 4 residues coordinate Zn(2+): C95, H98, C117, and H124. The stretch at 132–234 (LAEIYEQHVT…VEHQLRSCSK (103 aa)) forms a coiled coil. Residues 276 to 403 (YDSATFVLEN…NDTVILRFQV (128 aa)) form the MATH domain. Positions 419-450 (ITQLEAAQTGYIQQINNLKERLTIELSRTQKS) form a coiled coil. Disordered stretches follow at residues 447–514 (TQKS…HHEL), 529–561 (VNHLDGSSSSASSTATSNTEENDIDEETMSGEN), 645–665 (SLLQPTASYSRKDKDQRKQQA), 776–811 (AVDSGENSRSKGDCQVLAEGSSGSSQSGSRHSSPRA), and 874–961 (LESH…GGGR). S454 carries the post-translational modification Phosphoserine. The segment covering 504–514 (KIQNEDYHHEL) has biased composition (basic and acidic residues). A compositionally biased stretch (low complexity) spans 535 to 545 (SSSSASSTATS). Residues 548–561 (EENDIDEETMSGEN) are compositionally biased toward acidic residues. The span at 776 to 787 (AVDSGENSRSKG) shows a compositional bias: basic and acidic residues. Residues 795-806 (GSSGSSQSGSRH) show a composition bias toward low complexity. Residues 903 to 915 (SDIECDTENEEQE) are compositionally biased toward acidic residues.

It belongs to the TRIM/RBCC family. Associates with the PRC2/EED-EZH2 complex. In terms of processing, auto-ubiquitinated. Highly expressed in testis and brain. In embryonic tissues, expressed in epithelia, including ducts of the developing pancreas, epithelium of the midgut and nasal epithelium. In adult, detected in the central and peripheral nervous systems, including enteric ganglia, retina and the adrenal medulla (at protein level).

The protein localises to the chromosome. It is found in the cytoplasm. It localises to the perinuclear region. Its subcellular location is the peroxisome membrane. It carries out the reaction S-ubiquitinyl-[E2 ubiquitin-conjugating enzyme]-L-cysteine + [acceptor protein]-L-lysine = [E2 ubiquitin-conjugating enzyme]-L-cysteine + N(6)-ubiquitinyl-[acceptor protein]-L-lysine.. It participates in protein modification; protein ubiquitination. Functionally, E3 ubiquitin-protein ligase required to prevent centriole reduplication. Probably acts by ubiquitinating positive regulators of centriole reduplication. Mediates monoubiquitination of 'Lys-119' of histone H2A (H2AK119Ub), a specific tag for epigenetic transcriptional repression: associates with some Polycomb group (PcG) multiprotein PRC2-like complex and mediates repression of target genes. Also acts as a positive regulator of peroxisome import by mediating monoubiquitination of PEX5 at 'Lys-472': monoubiquitination promotes PEX5 stabilitation by preventing its polyubiquitination and degradation by the proteasome. In Mus musculus (Mouse), this protein is E3 ubiquitin-protein ligase TRIM37.